The chain runs to 708 residues: Protein MICRORCHIDIA 5 (708 aa).

Positions 1 to 11 (MAESGSTNPKS) are enriched in polar residues. The tract at residues 1–47 (MAESGSTNPKSPSVVPDSTLGGLKRDLRNYHDGDDSNNLSIKKSKTT) is disordered. Positions 23-34 (LKRDLRNYHDGD) are enriched in basic and acidic residues. The stretch at 590–665 (SVNLEAELQK…LENRQEGVST (76 aa)) forms a coiled coil. Positions 672–679 (ARRDVTED) match the Nuclear localization signal motif.

The protein belongs to the MORC ATPase protein family. In terms of assembly, homodimer and heterodimer. Component of an RNA-directed DNA methylation (RdDM) complex. The cofactor is Mg(2+). It depends on Mn(2+) as a cofactor.

It localises to the nucleus. In terms of biological role, exhibits ATPase activity. Binds DNA/RNA in a non-specific manner and exhibits endonuclease activity. Probably involved in DNA repair. Involved in RNA-directed DNA methylation (RdDM) as a component of the RdDM machinery and required for gene silencing. May also be involved in the regulation of chromatin architecture to maintain gene silencing. This Arabidopsis thaliana (Mouse-ear cress) protein is Protein MICRORCHIDIA 5.